Here is a 408-residue protein sequence, read N- to C-terminus: Phosphoglycerate kinase (408 aa).

Substrate contacts are provided by residues 24–26 (DLN), Arg-39, 62–65 (HLGR), Arg-121, and Arg-161. ATP contacts are provided by residues Lys-211, Gly-307, Glu-338, and 364-367 (GGDS).

This sequence belongs to the phosphoglycerate kinase family. Monomer.

It localises to the cytoplasm. The catalysed reaction is (2R)-3-phosphoglycerate + ATP = (2R)-3-phospho-glyceroyl phosphate + ADP. It functions in the pathway carbohydrate degradation; glycolysis; pyruvate from D-glyceraldehyde 3-phosphate: step 2/5. This chain is Phosphoglycerate kinase, found in Arthrobacter sp. (strain FB24).